We begin with the raw amino-acid sequence, 188 residues long: Probable nicotinate-nucleotide adenylyltransferase (188 aa).

Belongs to the NadD family.

The enzyme catalyses nicotinate beta-D-ribonucleotide + ATP + H(+) = deamido-NAD(+) + diphosphate. Its pathway is cofactor biosynthesis; NAD(+) biosynthesis; deamido-NAD(+) from nicotinate D-ribonucleotide: step 1/1. Its function is as follows. Catalyzes the reversible adenylation of nicotinate mononucleotide (NaMN) to nicotinic acid adenine dinucleotide (NaAD). This is Probable nicotinate-nucleotide adenylyltransferase from Solibacter usitatus (strain Ellin6076).